The chain runs to 114 residues: Iron-sulfur cluster insertion protein ErpA (114 aa).

Iron-sulfur cluster is bound by residues cysteine 42, cysteine 106, and cysteine 108.

The protein belongs to the HesB/IscA family. In terms of assembly, homodimer. The cofactor is iron-sulfur cluster.

In terms of biological role, required for insertion of 4Fe-4S clusters for at least IspG. This is Iron-sulfur cluster insertion protein ErpA from Pasteurella multocida (strain Pm70).